Here is a 105-residue protein sequence, read N- to C-terminus: MFAVIKTGGKQYRVAANDVLTIEKLEAAAGDSIEFTEVLVIGEGADAAIGAPFVTGASVKAEVVEQNRGKKVIAFKKRRRQNSKRSRGHRQHHTVVRITDIVAAK.

It belongs to the bacterial ribosomal protein bL21 family. As to quaternary structure, part of the 50S ribosomal subunit. Contacts protein L20.

This protein binds to 23S rRNA in the presence of protein L20. The sequence is that of Large ribosomal subunit protein bL21 from Rhizobium etli (strain CIAT 652).